The chain runs to 78 residues: Bowman-Birk type proteinase inhibitors I-A, I-B, and I-A' (78 aa).

7 disulfide bridges follow: C18–C72, C19–C34, C22–C68, C24–C32, C42–C49, C46–C61, and C51–C59.

This sequence belongs to the Bowman-Birk serine protease inhibitor family.

Its function is as follows. These inhibitors strongly inhibit trypsin. This Phaseolus angularis (Azuki bean) protein is Bowman-Birk type proteinase inhibitors I-A, I-B, and I-A'.